The primary structure comprises 206 residues: Small ribosomal subunit protein uS7 (206 aa).

The protein belongs to the universal ribosomal protein uS7 family. In terms of assembly, component of the small ribosomal subunit.

The protein localises to the cytoplasm. Functionally, component of the small ribosomal subunit. The ribosome is a large ribonucleoprotein complex responsible for the synthesis of proteins in the cell. This is Small ribosomal subunit protein uS7 from Entamoeba histolytica (strain ATCC 30459 / HM-1:IMSS / ABRM).